The primary structure comprises 451 residues: MREIVHLQTGQCGNQIGTKFWEIISDEHGIQPTGEYTGADKDLMELQLERINVYYNEGNQGKYVPRAVLVDLEPGTMDSVRAGPHGQLFKPDSFVFGQSGAGNNWAKGHYTEGAELVDSVLDVVRKEAEKCDCLQGFQLTHSLGGGTGSGMGTLLVSKIREEFPDRIMNTFSVVPSPKVSDTVVEPYNATLSIHQLVENTDETYCIDNEALYDICFRTLKLQNPTYGDLNHLVSLTMSGVTTCFRFPGQLNADLRKLAVNMVPFPRLHFFMPGFAPLTARGSQQYRALTVPELTQQMFDAKNMMAACDPRHGRYLTVAAIFRGRMSMKEVDEQMYNIQNKNSSFFVEWIPNNVKTAVCDIPPRGIKMASTFIGNSTAIHELFKRVGEQFTAMFRRKAFLHWYTGEGMDEMEFTEAESNMNDLVSEYQQYQEATADDEAEFEEEGEVEGEYA.

GTP is bound by residues Q11, E73, S142, G146, T147, G148, N208, and N230. E73 is a Mg(2+) binding site. The interval 430–451 (QEATADDEAEFEEEGEVEGEYA) is disordered. Residues 433–451 (TADDEAEFEEEGEVEGEYA) are compositionally biased toward acidic residues.

This sequence belongs to the tubulin family. Dimer of alpha and beta chains. A typical microtubule is a hollow water-filled tube with an outer diameter of 25 nm and an inner diameter of 15 nM. Alpha-beta heterodimers associate head-to-tail to form protofilaments running lengthwise along the microtubule wall with the beta-tubulin subunit facing the microtubule plus end conferring a structural polarity. Microtubules usually have 13 protofilaments but different protofilament numbers can be found in some organisms and specialized cells. The cofactor is Mg(2+).

It is found in the cytoplasm. Its subcellular location is the cytoskeleton. In terms of biological role, tubulin is the major constituent of microtubules, a cylinder consisting of laterally associated linear protofilaments composed of alpha- and beta-tubulin heterodimers. Microtubules grow by the addition of GTP-tubulin dimers to the microtubule end, where a stabilizing cap forms. Below the cap, tubulin dimers are in GDP-bound state, owing to GTPase activity of alpha-tubulin. This chain is Tubulin beta-1 chain, found in Homarus americanus (American lobster).